A 649-amino-acid polypeptide reads, in one-letter code: 1-deoxy-D-xylulose-5-phosphate synthase (649 aa).

Thiamine diphosphate contacts are provided by residues His73 and 114–116; that span reads SHA. Asp145 is a binding site for Mg(2+). Residues 146 to 147, Asn175, Tyr286, and Glu367 contribute to the thiamine diphosphate site; that span reads GA. Asn175 provides a ligand contact to Mg(2+).

It belongs to the transketolase family. DXPS subfamily. Homodimer. Mg(2+) is required as a cofactor. Requires thiamine diphosphate as cofactor.

It carries out the reaction D-glyceraldehyde 3-phosphate + pyruvate + H(+) = 1-deoxy-D-xylulose 5-phosphate + CO2. Its pathway is metabolic intermediate biosynthesis; 1-deoxy-D-xylulose 5-phosphate biosynthesis; 1-deoxy-D-xylulose 5-phosphate from D-glyceraldehyde 3-phosphate and pyruvate: step 1/1. In terms of biological role, catalyzes the acyloin condensation reaction between C atoms 2 and 3 of pyruvate and glyceraldehyde 3-phosphate to yield 1-deoxy-D-xylulose-5-phosphate (DXP). The sequence is that of 1-deoxy-D-xylulose-5-phosphate synthase from Rhodococcus jostii (strain RHA1).